Here is a 247-residue protein sequence, read N- to C-terminus: Phosphoribosylaminoimidazole-succinocarboxamide synthase (247 aa).

This sequence belongs to the SAICAR synthetase family.

The enzyme catalyses 5-amino-1-(5-phospho-D-ribosyl)imidazole-4-carboxylate + L-aspartate + ATP = (2S)-2-[5-amino-1-(5-phospho-beta-D-ribosyl)imidazole-4-carboxamido]succinate + ADP + phosphate + 2 H(+). Its pathway is purine metabolism; IMP biosynthesis via de novo pathway; 5-amino-1-(5-phospho-D-ribosyl)imidazole-4-carboxamide from 5-amino-1-(5-phospho-D-ribosyl)imidazole-4-carboxylate: step 1/2. In Gloeobacter violaceus (strain ATCC 29082 / PCC 7421), this protein is Phosphoribosylaminoimidazole-succinocarboxamide synthase.